The primary structure comprises 560 residues: MITKHLSDIDIAQQAKLRPIQDIAAKLQLHDEELECYGFTKAKISLTIFDRLKEQKEGHVILVTSINPTPAGEGKSTVTVGLGQAFEKIGKKAIIAMREPSLGPTMGIKGGAAGGGYSQVLPMEEINLHFTGDFHAITSAHNALSAFIDNHIHHGNELDIDARRIVWKRVLDLNDRALRQVVVGLGGQVNGYPREDGFDITVASEMMAILCLAEDLTDLKKRLSSIVVAYNRDGEPVTVGALGYEGVLTLLLKDALKPNLVQTIEGTPALVHGGPFANIAHGCNSLIATKMAAKLADYVVTEAGFGADLGAEKFLNIKTRAGDFKPGAVVIVATVRALKMHGGMKKTELKEENTQAVLKGIHNLEKHIETVQAFGLPYIVAVNRFITDTKEEIQAIEDWCLAHDHPVKAVNVWEEGGEGGTALAEELTTLIEKKKNSFSYLYEEDDSIEEKLSKVAKVVYGADGVTLTSKARKQLAAIEENSWGHLPVCMAKTQYSLSDDPALIGRPKGFTITIRELKPSVGAGFIVALTGSILTMPGLPKKPAALEMDLLEDGSVTGLF.

An ATP-binding site is contributed by 69 to 76 (TPAGEGKS).

Belongs to the formate--tetrahydrofolate ligase family.

The enzyme catalyses (6S)-5,6,7,8-tetrahydrofolate + formate + ATP = (6R)-10-formyltetrahydrofolate + ADP + phosphate. Its pathway is one-carbon metabolism; tetrahydrofolate interconversion. The sequence is that of Formate--tetrahydrofolate ligase from Bacillus pumilus (strain SAFR-032).